The primary structure comprises 152 residues: D-aminoacyl-tRNA deacylase (152 aa).

The short motif at 137–138 is the Gly-cisPro motif, important for rejection of L-amino acids element; the sequence is GP.

Belongs to the DTD family. Homodimer.

The protein resides in the cytoplasm. The enzyme catalyses glycyl-tRNA(Ala) + H2O = tRNA(Ala) + glycine + H(+). It catalyses the reaction a D-aminoacyl-tRNA + H2O = a tRNA + a D-alpha-amino acid + H(+). An aminoacyl-tRNA editing enzyme that deacylates mischarged D-aminoacyl-tRNAs. Also deacylates mischarged glycyl-tRNA(Ala), protecting cells against glycine mischarging by AlaRS. Acts via tRNA-based rather than protein-based catalysis; rejects L-amino acids rather than detecting D-amino acids in the active site. By recycling D-aminoacyl-tRNA to D-amino acids and free tRNA molecules, this enzyme counteracts the toxicity associated with the formation of D-aminoacyl-tRNA entities in vivo and helps enforce protein L-homochirality. The chain is D-aminoacyl-tRNA deacylase from Geobacter sulfurreducens (strain ATCC 51573 / DSM 12127 / PCA).